A 188-amino-acid chain; its full sequence is Probable manganese efflux pump MntP (188 aa).

5 helical membrane passes run 3–23, 66–86, 106–128, 143–163, and 168–188; these read ITATVLLAFGMSMDAFAASIG, LEWNHWIAFVLLIFLGGRMII, WLLVTTAIATSLDAMAVGVGLAF, ATLIMSTLGMMVGRFIGSIIG, and ILGGLVLIGIGVQILWTHFHG.

It belongs to the MntP (TC 9.B.29) family.

It localises to the cell inner membrane. In terms of biological role, probably functions as a manganese efflux pump. The polypeptide is Probable manganese efflux pump MntP (Escherichia coli O7:K1 (strain IAI39 / ExPEC)).